The following is a 333-amino-acid chain: Electron transfer flavoprotein subunit alpha, mitochondrial (333 aa).

Residues 1 to 19 (MFRAAAPGQLRRAASLLRF) constitute a mitochondrion transit peptide. Residues 20-204 (QSTLVIAEHA…GISEWLDQKL (185 aa)) form a domain I region. N6-acetyllysine; alternate is present on Lys59. Lys59 bears the N6-succinyllysine; alternate mark. An N6-acetyllysine modification is found at Lys62. N6-acetyllysine; alternate is present on Lys69. Residue Lys69 is modified to N6-succinyllysine; alternate. Lys75 carries the N6-acetyllysine modification. Position 85 is an N6-acetyllysine; alternate (Lys85). Lys85 carries the N6-succinyllysine; alternate modification. A Phosphothreonine modification is found at Thr93. An N6-acetyllysine mark is found at Lys101 and Lys139. At Ser140 the chain carries Phosphoserine. An N6-acetyllysine; alternate modification is found at Lys158. N6-succinyllysine; alternate is present on Lys158. At Lys164 the chain carries N6-acetyllysine. Lys187 is modified (N6-succinyllysine). Lys203 is subject to N6-acetyllysine; alternate. Position 203 is an N6-succinyllysine; alternate (Lys203). The domain II stretch occupies residues 205 to 333 (TKSDRPELTG…PEMTEILKKK (129 aa)). Lys216 is modified (N6-succinyllysine). An FAD-binding site is contributed by Arg223. An N6-acetyllysine; alternate mark is found at Lys226 and Lys232. 2 positions are modified to N6-succinyllysine; alternate: Lys226 and Lys232. FAD is bound by residues Ser248, 263–266 (VGQT), 281–286 (SGAIQH), and Asn300. The residue at position 301 (Lys301) is an N6-succinyllysine. 318–319 (DL) contacts FAD.

The protein belongs to the ETF alpha-subunit/FixB family. Heterodimer composed of ETFA and ETFB. Identified in a complex that contains ETFA, ETFB and ETFRF1. Interaction with ETFRF1 promotes dissociation of the bound FAD and loss of electron transfer activity. Interacts with TASOR. FAD serves as cofactor. In terms of tissue distribution, expressed in the spermatogonia, spermatocytes, ovary and granular cells within the cerebellum.

It localises to the mitochondrion matrix. Its function is as follows. Heterodimeric electron transfer flavoprotein that accepts electrons from several mitochondrial dehydrogenases, including acyl-CoA dehydrogenases, glutaryl-CoA and sarcosine dehydrogenase. It transfers the electrons to the main mitochondrial respiratory chain via ETF-ubiquinone oxidoreductase (ETF dehydrogenase). Required for normal mitochondrial fatty acid oxidation and normal amino acid metabolism. This chain is Electron transfer flavoprotein subunit alpha, mitochondrial (Etfa), found in Mus musculus (Mouse).